Consider the following 912-residue polypeptide: uncharacterized protein (912 aa).

Basic and acidic residues-rich tracts occupy residues 20–32 (IERL…AEPA) and 39–67 (HEYE…EDKT). The disordered stretch occupies residues 20 to 91 (IERLREQGRA…KPTLPQPETD (72 aa)). Positions 68–77 (RHKKLKHRSR) are enriched in basic residues.

This is an uncharacterized protein from Penicillium chrysogenum virus (isolate Caston/2003) (PcV).